The primary structure comprises 223 residues: Voltage-dependent calcium channel gamma-1 subunit (223 aa).

Topologically, residues 1–10 (MSQTKTAKVR) are cytoplasmic. Residues 11 to 29 (VTLFFILAGGVLAMVAVVT) form a helical membrane-spanning segment. Topologically, residues 30-109 (DHWAVLSPHL…TQKEYSISAA (80 aa)) are extracellular. 2 N-linked (GlcNAc...) asparagine glycosylation sites follow: Asn43 and Asn80. Cys57 and Cys81 form a disulfide bridge. A helical transmembrane segment spans residues 110–130 (AIAIFSLGFIIIGSICAFLSF). The Cytoplasmic segment spans residues 131-135 (GNKRD). Residues 136-156 (YLLRPASMFYAFAGLCLIVSV) form a helical membrane-spanning segment. At 157-180 (EVMRQSVKRMIDSEDTVWIEYYYS) the chain is on the extracellular side. Residues 181–205 (WSFACACAGFTLLFLGGLFLLLFSL) form a helical membrane-spanning segment. Topologically, residues 206 to 223 (PRMPQNPWESCMDTESEH) are cytoplasmic.

Belongs to the PMP-22/EMP/MP20 family. CACNG subfamily. In terms of assembly, component of a calcium channel complex consisting of a pore-forming alpha subunit (CACNA1S) and the ancillary subunits CACNB1 or CACNB2, CACNG1 and CACNA2D1. The channel complex contains alpha, beta, gamma and delta subunits in a 1:1:1:1 ratio, i.e. it contains either CACNB1 or CACNB2. Post-translationally, N-glycosylated. In terms of tissue distribution, skeletal muscle.

Its subcellular location is the cell membrane. It is found in the sarcolemma. Its function is as follows. Regulatory subunit of the voltage-gated calcium channel that gives rise to L-type calcium currents in skeletal muscle. Regulates channel inactivation kinetics. The chain is Voltage-dependent calcium channel gamma-1 subunit (Cacng1) from Rattus norvegicus (Rat).